The following is a 184-amino-acid chain: ATP synthase subunit b, chloroplastic (184 aa).

A helical membrane pass occupies residues 31 to 49 (IINSSVVLSVLIYFGKGVL).

It belongs to the ATPase B chain family. F-type ATPases have 2 components, F(1) - the catalytic core - and F(0) - the membrane proton channel. F(1) has five subunits: alpha(3), beta(3), gamma(1), delta(1), epsilon(1). F(0) has four main subunits: a(1), b(1), b'(1) and c(10-14). The alpha and beta chains form an alternating ring which encloses part of the gamma chain. F(1) is attached to F(0) by a central stalk formed by the gamma and epsilon chains, while a peripheral stalk is formed by the delta, b and b' chains.

Its subcellular location is the plastid. It is found in the chloroplast thylakoid membrane. Its function is as follows. F(1)F(0) ATP synthase produces ATP from ADP in the presence of a proton or sodium gradient. F-type ATPases consist of two structural domains, F(1) containing the extramembraneous catalytic core and F(0) containing the membrane proton channel, linked together by a central stalk and a peripheral stalk. During catalysis, ATP synthesis in the catalytic domain of F(1) is coupled via a rotary mechanism of the central stalk subunits to proton translocation. Component of the F(0) channel, it forms part of the peripheral stalk, linking F(1) to F(0). The sequence is that of ATP synthase subunit b, chloroplastic from Pinus thunbergii (Japanese black pine).